The sequence spans 824 residues: Protein-glutamine gamma-glutamyltransferase K (824 aa).

Over residues 1 to 10 (MEGPRSDVGR) the composition is skewed to basic and acidic residues. 2 disordered regions span residues 1-44 (MEGP…GGRS) and 61-110 (DDWG…AAGD). The residue at position 20 (threonine 20) is a Phosphothreonine. Residues serine 22, serine 70, serine 92, serine 100, and serine 103 each carry the phosphoserine modification. A compositionally biased stretch (low complexity) spans 65–76 (PEPSGSRSRGTS). The segment covering 85 to 100 (GDSRGRDSRGGRRPES) has biased composition (basic and acidic residues). Residues cysteine 385, histidine 444, and aspartate 467 contribute to the active site. Ca(2+) contacts are provided by asparagine 507, aspartate 509, glutamate 556, and glutamate 561. The disordered stretch occupies residues 801–824 (RGFSEAVGDSRSGENIPMAFRGGA). At serine 812 the chain carries Phosphoserine.

Belongs to the transglutaminase superfamily. Transglutaminase family. In terms of assembly, interacts with PLAAT4. The cofactor is Ca(2+). Post-translationally, palmitoylated. The membrane anchorage region possesses a cluster of five cysteines within which fatty acid(s) may become thioester-linked. It is subject to phorbol ester-stimulated phosphorylation and is hypersensitive to proteolysis, which releases the enzyme in a soluble form. In terms of processing, tyrosine-phosphorylated.

It localises to the membrane. It catalyses the reaction L-glutaminyl-[protein] + L-lysyl-[protein] = [protein]-L-lysyl-N(6)-5-L-glutamyl-[protein] + NH4(+). Catalyzes the cross-linking of proteins and the conjugation of polyamines to proteins. Responsible for cross-linking epidermal proteins during formation of the stratum corneum. Involved in cell proliferation. The protein is Protein-glutamine gamma-glutamyltransferase K (Tgm1) of Rattus norvegicus (Rat).